Consider the following 363-residue polypeptide: Putative dipeptidase YkvY (363 aa).

Mn(2+) contacts are provided by Asp-222, Asp-233, His-297, Glu-326, and Glu-340.

It belongs to the peptidase M24B family. The cofactor is Mn(2+).

This is Putative dipeptidase YkvY (ykvY) from Bacillus subtilis (strain 168).